The primary structure comprises 248 residues: Mannose-binding protein C (248 aa).

A signal peptide spans 1 to 20 (MSLFPSLPLLLLSVVATSYS). The Collagen-like domain occupies 42 to 99 (GINGFPGKDGRDGTKGEKGEPGQGLRGLQGPPGKLGPPGNPGPSGSPGPKGQKGDPGE). The interval 43–111 (INGFPGKDGR…DCDSSLAASE (69 aa)) is disordered. At proline 47 the chain carries 4-hydroxyproline. Residues 49–61 (KDGRDGTKGEKGE) are compositionally biased toward basic and acidic residues. 4-hydroxyproline is present on residues proline 73, proline 79, proline 82, and proline 88. Over residues 75-87 (KLGPPGNPGPSGS) the composition is skewed to pro residues. Residues 112–130 (RKALQTEMAHIKKWLTFSL) are a coiled coil. The C-type lectin domain maps to 134–245 (VGNKFFLTNG…CSSSHLALCE (112 aa)). 2 disulfides stabilise this stretch: cysteine 155–cysteine 244 and cysteine 222–cysteine 236.

As to quaternary structure, oligomeric complex of 3 or more homotrimers. Interacts with MASP1 and MASP2. Interacts with MEP1A and MEP1B and may inhibit their catalytic activity. Hydroxylation on proline residues within the sequence motif, GXPG, is most likely to be 4-hydroxy as this fits the requirement for 4-hydroxylation in vertebrates.

The protein localises to the secreted. Its function is as follows. Calcium-dependent lectin involved in innate immune defense. Binds mannose, fucose and N-acetylglucosamine on different microorganisms and activates the lectin complement pathway. Binds to late apoptotic cells, as well as to apoptotic blebs and to necrotic cells, but not to early apoptotic cells, facilitating their uptake by macrophages. This chain is Mannose-binding protein C (MBL2), found in Trachypithecus obscurus (Dusky leaf-monkey).